The sequence spans 308 residues: Ribonuclease HIII (308 aa).

In terms of domain architecture, RNase H type-2 spans 91–308; sequence KNVIGSDEVG…TEKALKMVKK (218 aa). 3 residues coordinate a divalent metal cation: Asp97, Glu98, and Asp202.

The protein belongs to the RNase HII family. RnhC subfamily. The cofactor is Mn(2+). Mg(2+) is required as a cofactor.

It is found in the cytoplasm. It carries out the reaction Endonucleolytic cleavage to 5'-phosphomonoester.. Endonuclease that specifically degrades the RNA of RNA-DNA hybrids. In Listeria monocytogenes serotype 4b (strain F2365), this protein is Ribonuclease HIII.